We begin with the raw amino-acid sequence, 585 residues long: Arginine--tRNA ligase (585 aa).

The 'HIGH' region signature appears at 126 to 136 (PNIAKEMHVGH).

It belongs to the class-I aminoacyl-tRNA synthetase family. In terms of assembly, monomer.

The protein localises to the cytoplasm. It catalyses the reaction tRNA(Arg) + L-arginine + ATP = L-arginyl-tRNA(Arg) + AMP + diphosphate. The protein is Arginine--tRNA ligase of Rippkaea orientalis (strain PCC 8801 / RF-1) (Cyanothece sp. (strain PCC 8801)).